A 184-amino-acid polypeptide reads, in one-letter code: Protein Syd (184 aa).

The protein belongs to the Syd family.

It is found in the cell inner membrane. Interacts with the SecY protein in vivo. May bind preferentially to an uncomplexed state of SecY, thus functioning either as a chelating agent for excess SecY in the cell or as a regulatory factor that negatively controls the translocase function. The polypeptide is Protein Syd (Psychromonas ingrahamii (strain DSM 17664 / CCUG 51855 / 37)).